We begin with the raw amino-acid sequence, 273 residues long: 4-hydroxy-tetrahydrodipicolinate reductase (273 aa).

Residues 12 to 17 (GAGGRM) and E38 contribute to the NAD(+) site. R39 contacts NADP(+). Residues 102–104 (GTT) and 126–129 (AANF) contribute to the NAD(+) site. Residue H159 is the Proton donor/acceptor of the active site. (S)-2,3,4,5-tetrahydrodipicolinate is bound at residue H160. K163 serves as the catalytic Proton donor. Residue 169–170 (GT) participates in (S)-2,3,4,5-tetrahydrodipicolinate binding.

Belongs to the DapB family. In terms of assembly, homotetramer.

The protein localises to the cytoplasm. It carries out the reaction (S)-2,3,4,5-tetrahydrodipicolinate + NAD(+) + H2O = (2S,4S)-4-hydroxy-2,3,4,5-tetrahydrodipicolinate + NADH + H(+). The enzyme catalyses (S)-2,3,4,5-tetrahydrodipicolinate + NADP(+) + H2O = (2S,4S)-4-hydroxy-2,3,4,5-tetrahydrodipicolinate + NADPH + H(+). It functions in the pathway amino-acid biosynthesis; L-lysine biosynthesis via DAP pathway; (S)-tetrahydrodipicolinate from L-aspartate: step 4/4. Its function is as follows. Catalyzes the conversion of 4-hydroxy-tetrahydrodipicolinate (HTPA) to tetrahydrodipicolinate. The chain is 4-hydroxy-tetrahydrodipicolinate reductase from Shigella flexneri.